We begin with the raw amino-acid sequence, 1049 residues long: MDWSFFRVVAMLFIFLVVVEVNSEFRIQVRDYNTKNGTIKWHSIRRQKREWIKFAAACREGEDNSKRNPIAKIHSDCAANQQVTYRISGVGIDQPPYGIFVINQKTGEINITSIVDREVTPFFIIYCRALNSMGQDLERPLELRVRVLDINDNPPVFSMATFAGQIEENSNANTLVMILNATDADEPNNLNSKIAFKIIRQEPSDSPMFIINRNTGEIRTMNNFLDREQYGQYALAVRGSDRDGGADGMSAECECNIKILDVNDNIPYMEQSSYTIEIQENTLNSNLLEIRVIDLDEEFSANWMAVIFFISGNEGNWFEIEMNERTNVGILKVVKPLDYEAMQSLQLSIGVRNKAEFHHSIMSQYKLKASAISVTVLNVIEGPVFRPGSKTYVVTGNMGSNDKVGDFVATDLDTGRPSTTVRYVMGNNPADLLAVDSRTGKLTLKNKVTKEQYNMLGGKYQGTILSIDDNLQRTCTGTININIQSFGNDDRTNTEPNTKITTNTGRQESTSSTNYDTSTTSTDSSQVYSSEPGNGAKDLLSDNVHFGPAGIGLLIMGFLVLGLVPFLMICCDCGGAPRSAAGFEPVPECSDGAIHSWAVEGPQPEPRDITTVIPQIPPDNANIIECIDNSGVYTNEYGGREMQDLGGGERMTGFELTEGVKTSGMPEICQEYSGTLRRNSMRECREGGLNMNFMESYFCQKAYAYADEDEGRPSNDCLLIYDIEGVGSPAGSVGCCSFIGEDLDDSFLDTLGPKFKKLADISLGKESYPDLDPSWPPQSTEPVCLPQETEPVVSGHPPISPHFGTTTVISESTYPSGPGVLHPKPILDPLGYGNVTVTESYTTSDTLKPSVHVHDNRPASNVVVTERVVGPISGADLHGMLEMPDLRDGSNVIVTERVIAPSSSLPTSLTIHHPRESSNVVVTERVIQPTSGMIGSLSMHPELANAHNVIVTERVVSGAGVTGISGTTGISGGIGSSGLVGTSMGAGSGALSGAGISGGGIGLSSLGGTASIGHMRSSSDHHFNQTIGSASPSTARSRITKYSTVQYSK.

Residues 1-23 (MDWSFFRVVAMLFIFLVVVEVNS) form the signal peptide. The propeptide occupies 24–49 (EFRIQVRDYNTKNGTIKWHSIRRQKR). Residues N36, N110, and N180 are each glycosylated (N-linked (GlcNAc...) asparagine). 4 Cadherin domains span residues 50 to 158 (EWIK…PVFS), 159 to 270 (MATF…PYME), 271 to 385 (QSSY…GPVF), and 386 to 497 (RPGS…TEPN). Residues 50–548 (EWIKFAAACR…LLSDNVHFGP (499 aa)) are Extracellular-facing. The disordered stretch occupies residues 485 to 534 (SFGNDDRTNTEPNTKITTNTGRQESTSSTNYDTSTTSTDSSQVYSSEPGN). The segment covering 494–508 (TEPNTKITTNTGRQE) has biased composition (polar residues). Residues 509 to 530 (STSSTNYDTSTTSTDSSQVYSS) are compositionally biased toward low complexity. The chain crosses the membrane as a helical span at residues 549–569 (AGIGLLIMGFLVLGLVPFLMI). Residues 570 to 1049 (CCDCGGAPRS…TKYSTVQYSK (480 aa)) lie on the Cytoplasmic side of the membrane. Phosphoserine is present on S579. Desmoglein repeat repeat units follow at residues 813–839 (TYPS…TVTE), 840–869 (SYTT…ERVV), 870–899 (GPIS…ERVI), 900–927 (APSS…ERVI), and 928–956 (QPTS…ERVV). Residues 1014–1035 (HMRSSSDHHFNQTIGSASPSTA) are disordered. Over residues 1024–1035 (NQTIGSASPSTA) the composition is skewed to polar residues.

Binds to JUP/plakoglobin. Interacts with PKP2. Interacts with DSC3; there is evidence to suggest that the interaction promotes cell-cell adhesion of keratinocytes. As to quaternary structure, (Microbial infection) Interacts with Staphylococcus aureus protein SdrD; this interaction increases S.aureus adherence to keratinocytes. In terms of tissue distribution, expressed in all suprabasal layers of the epidermis, with the highest expression seen in the granular layer (at protein level).

The protein localises to the cell membrane. The protein resides in the cell junction. Its subcellular location is the desmosome. It localises to the cytoplasm. It is found in the nucleus. Its function is as follows. Component of intercellular desmosome junctions. Involved in the interaction of plaque proteins and intermediate filaments mediating cell-cell adhesion. In Homo sapiens (Human), this protein is Desmoglein-1 (DSG1).